A 423-amino-acid polypeptide reads, in one-letter code: Adenylosuccinate synthetase (423 aa).

GTP contacts are provided by residues 11–17 (GDEGKGK) and 39–41 (GHT). Residue Asp12 is the Proton acceptor of the active site. Mg(2+) contacts are provided by Asp12 and Gly39. IMP contacts are provided by residues 12–15 (DEGK), 37–40 (NAGH), Thr127, Arg141, Gln223, Thr238, and Arg302. The active-site Proton donor is the His40. Residue 298 to 304 (TTTGRSR) coordinates substrate. GTP contacts are provided by residues Arg304, 330 to 332 (KLD), and 412 to 414 (SVG).

Belongs to the adenylosuccinate synthetase family. As to quaternary structure, homodimer. It depends on Mg(2+) as a cofactor.

Its subcellular location is the cytoplasm. The enzyme catalyses IMP + L-aspartate + GTP = N(6)-(1,2-dicarboxyethyl)-AMP + GDP + phosphate + 2 H(+). The protein operates within purine metabolism; AMP biosynthesis via de novo pathway; AMP from IMP: step 1/2. Plays an important role in the de novo pathway of purine nucleotide biosynthesis. Catalyzes the first committed step in the biosynthesis of AMP from IMP. The polypeptide is Adenylosuccinate synthetase (Methanococcoides burtonii (strain DSM 6242 / NBRC 107633 / OCM 468 / ACE-M)).